The following is a 258-amino-acid chain: MKVMMALLQKEWLEGWKSGKLIWLPIAMMIVGLTQPLTIYYMPEIIAHGGNLPDGMKISFTMPSGSEVMVSTLSQFNTLGMALVIFSVMGSVANERNQGVTALIMSRPVTAAHYIVSKWLIQSVIGIMSFAAGYGLAYYYVRLLFEDASFSRFAASLGLYALWVIFIVTAGLAGSTIFRSVGAAAACGIGLTAAVSFAVSLFPDGAKWLPAEICKQAEHILLHGERADFFGWSLTFSILCIMLLAVFSVWRFRRYESY.

Transmembrane regions (helical) follow at residues 21–41 (LIWL…TIYY), 73–93 (LSQF…GSVA), 119–139 (WLIQ…LAYY), 153–173 (FAAS…AGLA), 182–202 (GAAA…VSLF), and 229–249 (FFGW…VFSV).

The protein localises to the cell membrane. This is an uncharacterized protein from Bacillus subtilis (strain 168).